A 215-amino-acid chain; its full sequence is Imidazole glycerol phosphate synthase subunit HisH (215 aa).

In terms of domain architecture, Glutamine amidotransferase type-1 spans 8–215 (KVVVFDYGFG…QLLNNWIGTL (208 aa)). The Nucleophile role is filled by C86. Active-site residues include H196 and E198.

In terms of assembly, heterodimer of HisH and HisF.

The protein resides in the cytoplasm. The enzyme catalyses 5-[(5-phospho-1-deoxy-D-ribulos-1-ylimino)methylamino]-1-(5-phospho-beta-D-ribosyl)imidazole-4-carboxamide + L-glutamine = D-erythro-1-(imidazol-4-yl)glycerol 3-phosphate + 5-amino-1-(5-phospho-beta-D-ribosyl)imidazole-4-carboxamide + L-glutamate + H(+). It carries out the reaction L-glutamine + H2O = L-glutamate + NH4(+). The protein operates within amino-acid biosynthesis; L-histidine biosynthesis; L-histidine from 5-phospho-alpha-D-ribose 1-diphosphate: step 5/9. Its function is as follows. IGPS catalyzes the conversion of PRFAR and glutamine to IGP, AICAR and glutamate. The HisH subunit catalyzes the hydrolysis of glutamine to glutamate and ammonia as part of the synthesis of IGP and AICAR. The resulting ammonia molecule is channeled to the active site of HisF. The chain is Imidazole glycerol phosphate synthase subunit HisH from Streptomyces avermitilis (strain ATCC 31267 / DSM 46492 / JCM 5070 / NBRC 14893 / NCIMB 12804 / NRRL 8165 / MA-4680).